Reading from the N-terminus, the 287-residue chain is Thioredoxin-related transmembrane protein 2 (287 aa).

An N-terminal signal peptide occupies residues 1 to 35 (MAVLAPLLAFLYAVPGLLRWVSQPYYLLSALLSVS). At 36–112 (FLLVRKVPPV…ILFFRLDLRM (77 aa)) the chain is on the extracellular side. A helical membrane pass occupies residues 113 to 133 (GLLYITLCIVFLMTCKPPLYL). The Cytoplasmic portion of the chain corresponds to 134 to 287 (GPEHIKYFSD…NEYNDSKKDQ (154 aa)). Positions 135 to 269 (PEHIKYFSDK…LYQKAKKIRK (135 aa)) constitute a Thioredoxin domain. The Di-lysine motif signature appears at 284 to 287 (KKDQ).

As to quaternary structure, monomer. Homodimer; disulfide-linked. Occurs in both reduced and oxidized monomeric form. Oxidative conditions increase homodimerization.

The protein resides in the endoplasmic reticulum membrane. It localises to the mitochondrion membrane. Endoplasmic reticulum and mitochondria-associated protein that probably functions as a regulator of cellular redox state and thereby regulates protein post-translational modification, protein folding and mitochondrial activity. The sequence is that of Thioredoxin-related transmembrane protein 2 (tmx2) from Xenopus tropicalis (Western clawed frog).